The sequence spans 476 residues: MKIMFVAAEGAPFAKTGGLGDVIGALPKSLVKNGHEVFVILPYYDVVDQAFGHQVEDVLYFYTQVGWRRQYVGIKKLVKDKVTFYFIDNQAYFFRGRIYGDWDDGERFAYFQLAAIEAMEKIGVIPDILHVHDYHTAMIPFLLKEKYHWIQAYQAIRTVFTIHNIAFQGQFDPGMLGDLFGVGIGRYEDGTLRWHDCLNWMKAAVLYADRVTTVSPSYAHEIQTPAFGQGLDQVMRMEAGKLSGIVNGIDTDLFNPARDPHLPASFSAEDLSGKAATKQVLQERLGLPVRADVPLIGMVSRLTDQKGFQLVLEELSHILQQDVQLVLLGTGDPDYEAAFSWFAKAYPEKLSANITFDLPLAQQIYGACDLFLMPSAFEPCGLSQMMAMRYGAIPIVHEIGGLKDTVASYNAYEKTGTGFGFDQFSGFWLTQTLLFALDIYHNHKEDWQTIQQHAMTKDFSWDTASLAYLDLYKSLL.

Residue K15 coordinates ADP-alpha-D-glucose.

It belongs to the glycosyltransferase 1 family. Bacterial/plant glycogen synthase subfamily.

It catalyses the reaction [(1-&gt;4)-alpha-D-glucosyl](n) + ADP-alpha-D-glucose = [(1-&gt;4)-alpha-D-glucosyl](n+1) + ADP + H(+). The protein operates within glycan biosynthesis; glycogen biosynthesis. Its function is as follows. Synthesizes alpha-1,4-glucan chains using ADP-glucose. The polypeptide is Glycogen synthase (Streptococcus equi subsp. zooepidemicus (strain H70)).